A 776-amino-acid chain; its full sequence is Zinc finger CCCH-type antiviral protein 1 (776 aa).

N-acetylalanine is present on A2. The N-terminal domain stretch occupies residues 2-254; that stretch reads ADPGVCCFIT…DRSKSRDRFL (253 aa). The short motif at 69–76 is the Nuclear localization signal element; it reads RARVCRRK. 4 consecutive C3H1-type zinc fingers follow at residues 73 to 86, 88 to 110, 150 to 172, and 169 to 193; these read CRRK…DSLH, CKLN…KYSH, CKSY…ERLH, and ERLH…SHNL. A disordered region spans residues 221-249; it reads NKHARRNPPGTRAAHPHRRGGAHRDRSKS. Positions 224–254 are binding to EXOSC5; that stretch reads ARRNPPGTRAAHPHRRGGAHRDRSKSRDRFL. Phosphoserine; by GSK3-beta occurs at positions 257, 262, 266, and 270. Position 274 is a phosphoserine (S274). Phosphothreonine is present on T278. S283 carries the phosphoserine modification. Residues 284–291 carry the Nuclear export signal motif; the sequence is LEDVSVDV. The interval 308-355 is disordered; that stretch reads PVSSKAAGVQGPSQMRASQEFSEDGNLDDIFSRNRSDSSSSRASAAKV. Polar residues predominate over residues 318–327; sequence GPSQMRASQE. Residues S325, S351, and S398 each carry the phosphoserine modification. Low complexity predominate over residues 344–353; the sequence is DSSSSRASAA. A Nuclear localization signal motif is present at residues 405–406; that stretch reads KK. Positions 457–483 are disordered; it reads WASASTHNAPNGSSQIMDETPNVSKSS. Residues 459–483 are compositionally biased toward polar residues; that stretch reads SASTHNAPNGSSQIMDETPNVSKSS. Position 501 is a phosphotyrosine (Y501). The segment at 512–562 is disordered; that stretch reads LAVPGEATTPVQSNRLPQSPLSSSSHRAAASGSPGKNSTHTSVSPAIESSR. Residues 523-546 show a composition bias toward low complexity; sequence QSNRLPQSPLSSSSHRAAASGSPG. Phosphoserine occurs at positions 544 and 667. One can recognise a WWE domain in the interval 671-758; the sequence is YEEKPLSAVF…ASKTQRHVVR (88 aa).

It belongs to the ARTD/PARP family. As to quaternary structure, homodimer or homooligomer. Homooligomerization is essential for its antiviral activity. Interacts with EXOSC5. Interacts with EXOSC3, EXOSC7, DCP2 and DCP1A. Interacts with PARN in an RNA-independent manner. Interacts with XRN1 in an RNA-dependent manner. Interacts (via N-terminal domain) with DHX30 (via N-terminus) in an RNA-independent manner. Interacts (via N-terminal domain) with DDX17 in an RNA-independent manner. In terms of processing, phosphorylation at Ser-274 is essential for sequential phosphorylation of Ser-270, Ser-266, Ser-262 and Ser-257 by GSK3-beta. Phosphorylation by GSK3-beta enhances its antiviral activity. In terms of tissue distribution, expressed in the kidney and liver.

It localises to the cytoplasm. It is found in the nucleus. Functionally, antiviral protein which inhibits the replication of viruses by recruiting the cellular RNA degradation machineries to degrade the viral mRNAs. Binds to a ZAP-responsive element (ZRE) present in the target viral mRNA, recruits cellular poly(A)-specific ribonuclease PARN to remove the poly(A) tail, and the 3'-5' exoribonuclease complex exosome to degrade the RNA body from the 3'-end. It also recruits the decapping complex DCP1-DCP2 through RNA helicase p72 (DDX17) to remove the cap structure of the viral mRNA to initiate its degradation from the 5'-end. Its target viruses belong to families which include retroviridae: human immunodeficiency virus type 1 (HIV-1) and moloney and murine leukemia virus (MoMLV), filoviridae: ebola virus (EBOV) and marburg virus (MARV), togaviridae: sindbis virus (SINV) and Ross river virus (RRV). Specifically targets the multiply spliced but not unspliced or singly spliced HIV-1 mRNAs for degradation. The chain is Zinc finger CCCH-type antiviral protein 1 (Zc3hav1) from Rattus norvegicus (Rat).